A 470-amino-acid polypeptide reads, in one-letter code: Glutamate--tRNA ligase 1 (470 aa).

The 'HIGH' region motif lies at 8-18; that stretch reads PSPTGYLHVGG. A 'KMSKS' region motif is present at residues 250 to 254; sequence KLSKR. Residue K253 participates in ATP binding.

Belongs to the class-I aminoacyl-tRNA synthetase family. Glutamate--tRNA ligase type 1 subfamily. As to quaternary structure, monomer.

The protein resides in the cytoplasm. The catalysed reaction is tRNA(Glu) + L-glutamate + ATP = L-glutamyl-tRNA(Glu) + AMP + diphosphate. Its function is as follows. Catalyzes the attachment of glutamate to tRNA(Glu) in a two-step reaction: glutamate is first activated by ATP to form Glu-AMP and then transferred to the acceptor end of tRNA(Glu). The sequence is that of Glutamate--tRNA ligase 1 from Pseudothermotoga lettingae (strain ATCC BAA-301 / DSM 14385 / NBRC 107922 / TMO) (Thermotoga lettingae).